The sequence spans 428 residues: Enolase (428 aa).

Glutamine 163 is a (2R)-2-phosphoglycerate binding site. The active-site Proton donor is glutamate 205. Aspartate 242, glutamate 285, and aspartate 312 together coordinate Mg(2+). 4 residues coordinate (2R)-2-phosphoglycerate: lysine 337, arginine 366, serine 367, and lysine 388. Lysine 337 serves as the catalytic Proton acceptor.

It belongs to the enolase family. The cofactor is Mg(2+).

It is found in the cytoplasm. The protein localises to the secreted. It localises to the cell surface. It catalyses the reaction (2R)-2-phosphoglycerate = phosphoenolpyruvate + H2O. It functions in the pathway carbohydrate degradation; glycolysis; pyruvate from D-glyceraldehyde 3-phosphate: step 4/5. Catalyzes the reversible conversion of 2-phosphoglycerate (2-PG) into phosphoenolpyruvate (PEP). It is essential for the degradation of carbohydrates via glycolysis. This Moorella thermoacetica (strain ATCC 39073 / JCM 9320) protein is Enolase.